Here is a 264-residue protein sequence, read N- to C-terminus: Movement protein (264 aa).

The disordered stretch occupies residues 211–264; it reads RTKSSKRGPKNNNNLGKGRSGGRPKPKSVDEVEEEFDNLIEDEAETSVADSDSY. Residues 241–255 are compositionally biased toward acidic residues; sequence EVEEEFDNLIEDEAE.

Belongs to the tobamovirus movement protein family. Binds to host RBCS at the plasmodesmata; this interaction seems required for viral systemic movement. In resistant plants, interacts with host MBP2C at host microtubules; this interaction prevents virus cell to cell movement. In resistant plants, interacts with host resistance (R) protein (e.g. tomato ToMV resistance protein TM-2(2), AC Q71BG9) at the host plasma membrane; this interaction triggers host defense responses leading to programmed cell death.

It is found in the host cytoplasm. Its subcellular location is the host cytoskeleton. It localises to the host cell junction. The protein resides in the host plasmodesma. Functionally, transports viral genome to neighboring plant cells directly through plasmosdesmata, without any budding. The movement protein allows efficient cell to cell propagation, by bypassing the host cell wall barrier. Forms a ribonucleoprotein complex with viral RNA. Binds microtubules and modulates microtubule stability. Can bind double-stranded DNA. Triggers host hypersensitive defense reaction in incompatible plants harboring resistance (R) proteins. The protein is Movement protein (MP) of Antirrhinum majus (Garden snapdragon).